The primary structure comprises 1382 residues: DNA-directed RNA polymerase subunit beta (1382 aa).

The protein belongs to the RNA polymerase beta chain family. In terms of assembly, the RNAP catalytic core consists of 2 alpha, 1 beta, 1 beta' and 1 omega subunit. When a sigma factor is associated with the core the holoenzyme is formed, which can initiate transcription.

The enzyme catalyses RNA(n) + a ribonucleoside 5'-triphosphate = RNA(n+1) + diphosphate. Its function is as follows. DNA-dependent RNA polymerase catalyzes the transcription of DNA into RNA using the four ribonucleoside triphosphates as substrates. This is DNA-directed RNA polymerase subunit beta from Anaplasma marginale (strain Florida).